The primary structure comprises 938 residues: Isoleucine--tRNA ligase (938 aa).

The short motif at 58-68 (PYANGSIHIGH) is the 'HIGH' region element. L-isoleucyl-5'-AMP is bound at residue glutamate 561. Residues 602 to 606 (KMSKS) carry the 'KMSKS' region motif. Position 605 (lysine 605) interacts with ATP. 4 residues coordinate Zn(2+): cysteine 901, cysteine 904, cysteine 921, and cysteine 924.

This sequence belongs to the class-I aminoacyl-tRNA synthetase family. IleS type 1 subfamily. As to quaternary structure, monomer. Requires Zn(2+) as cofactor.

The protein resides in the cytoplasm. It carries out the reaction tRNA(Ile) + L-isoleucine + ATP = L-isoleucyl-tRNA(Ile) + AMP + diphosphate. Functionally, catalyzes the attachment of isoleucine to tRNA(Ile). As IleRS can inadvertently accommodate and process structurally similar amino acids such as valine, to avoid such errors it has two additional distinct tRNA(Ile)-dependent editing activities. One activity is designated as 'pretransfer' editing and involves the hydrolysis of activated Val-AMP. The other activity is designated 'posttransfer' editing and involves deacylation of mischarged Val-tRNA(Ile). This chain is Isoleucine--tRNA ligase, found in Baumannia cicadellinicola subsp. Homalodisca coagulata.